The sequence spans 404 residues: Alpha-galactosidase A (404 aa).

The first 23 residues, 1–23, serve as a signal peptide directing secretion; that stretch reads MRKQLLLGLGLVSALLVSVQASA. Disulfide bonds link Cys-45/Cys-77 and Cys-124/Cys-154. The active-site Nucleophile is Asp-152. Residue 185 to 189 participates in substrate binding; it reads EWGDN. Asp-207 serves as the catalytic Proton donor.

It belongs to the glycosyl hydrolase 27 family.

The catalysed reaction is Hydrolysis of terminal, non-reducing alpha-D-galactose residues in alpha-D-galactosides, including galactose oligosaccharides, galactomannans and galactolipids.. In terms of biological role, hydrolyzes galactomannan found in plant cell wall, by cleaving alpha-1,6-D-galactose side-chains from the mannan backbone. Appears to act in synergy with mannanase (ManA) to elicit hydrolysis of galactomannan. Has greater activity against galactomannans with decreased degree of polymerisation values. To a lesser extent, is also able to degrade other galactosides containing alpha-1,6-linked D-galactose, such as melibiose and stachyose. In Cellvibrio japonicus (strain Ueda107) (Pseudomonas fluorescens subsp. cellulosa), this protein is Alpha-galactosidase A (agaA).